Consider the following 202-residue polypeptide: Orotate phosphoribosyltransferase (202 aa).

A 5-phospho-alpha-D-ribose 1-diphosphate-binding site is contributed by 113–121 (EDIITTGGS). 2 residues coordinate orotate: Thr-117 and Arg-145.

It belongs to the purine/pyrimidine phosphoribosyltransferase family. PyrE subfamily. As to quaternary structure, homodimer. Requires Mg(2+) as cofactor.

The catalysed reaction is orotidine 5'-phosphate + diphosphate = orotate + 5-phospho-alpha-D-ribose 1-diphosphate. It functions in the pathway pyrimidine metabolism; UMP biosynthesis via de novo pathway; UMP from orotate: step 1/2. In terms of biological role, catalyzes the transfer of a ribosyl phosphate group from 5-phosphoribose 1-diphosphate to orotate, leading to the formation of orotidine monophosphate (OMP). The protein is Orotate phosphoribosyltransferase of Sulfurimonas denitrificans (strain ATCC 33889 / DSM 1251) (Thiomicrospira denitrificans (strain ATCC 33889 / DSM 1251)).